The following is a 1365-amino-acid chain: Homeotic protein spalt-major (1365 aa).

3 disordered regions span residues 47-194, 270-298, and 322-363; these read SADK…EVTL, QAKQ…EEEE, and LINA…NTHK. Low complexity-rich tracts occupy residues 63-76 and 87-99; these read SPLT…SPSR and EQST…PEQS. Positions 103–117 are enriched in basic and acidic residues; sequence HQLENDIKSEAKSEI. Positions 146-157 are enriched in low complexity; sequence PSSPVAEASAEE. Residues 159–181 are compositionally biased toward basic and acidic residues; that stretch reads ATERTPEKEKEKDVEVDVEKPDE. Residues 275–298 show a composition bias toward acidic residues; it reads EDTEEDADQEQDQEQETDTYEEEE. Over residues 346–363 the composition is skewed to basic and acidic residues; sequence HDHESQPNRRPSLDNTHK. 2 consecutive C2H2-type zinc fingers follow at residues 451 to 473 and 479 to 501; these read HRCR…IRSH and FKCN…FQRH. Disordered stretches follow at residues 508–554 and 586–716; these read VPMN…ASFP and ELPT…TPGQ. Residues 530–539 are compositionally biased toward polar residues; sequence MSPTDSSPNH. Positions 540–554 are enriched in pro residues; that stretch reads SPAPPPLGSAPASFP. Composition is skewed to basic and acidic residues over residues 603–622 and 638–662; these read PQVK…HEQE and VRIK…EPRR. 2 positions are modified to phosphoserine: Ser739 and Ser744. Residues 740–772 are disordered; it reads PEHHSPVRSPAGGALPPGVPPPPHHHPHHMARS. 3 consecutive C2H2-type zinc fingers follow at residues 824 to 846, 852 to 874, and 884 to 906; these read NQCV…YRTH, FKCR…MAVH, and HQCP…IRLH. Disordered stretches follow at residues 948 to 1012, 1030 to 1129, and 1146 to 1241; these read ALPG…RSGD, VVNT…ILTS, and HHLQ…GARP. Over residues 976 to 991 the composition is skewed to acidic residues; that stretch reads DMDDNMDCGEDYDDDV. Low complexity predominate over residues 1040–1054; that stretch reads SSASSHGHSVGSTSA. Over residues 1055–1079 the composition is skewed to polar residues; sequence PTSPSVHASSQVIKRSSSPARSEAS. Ser1076 and Ser1079 each carry phosphoserine. Composition is skewed to low complexity over residues 1085–1100, 1114–1123, and 1146–1168; these read LTPR…SRSP, RSPSGSSHAS, and HHLQ…AAAA. The segment covering 1181–1191 has biased composition (basic and acidic residues); sequence QHQEQLRREAA. Positions 1192 to 1218 are enriched in low complexity; that stretch reads EAQQKAAAAAAAAAAAAAAQRQTPPQA. C2H2-type zinc fingers lie at residues 1289 to 1311 and 1317 to 1339; these read TTCG…YRSH and FKCS…MLTH.

The protein belongs to the sal C2H2-type zinc-finger protein family.

The protein resides in the nucleus. In terms of biological role, required for the establishment of the posterior-most head and the anterior-most tail segments of the embryo. Probably function as a transcriptional regulator. Could repress the transcription of the tsh gene. This chain is Homeotic protein spalt-major (salm), found in Drosophila melanogaster (Fruit fly).